Consider the following 276-residue polypeptide: Putative translation initiation factor eIF-2B subunit 2-like (276 aa).

It belongs to the eIF-2B alpha/beta/delta subunits family. As to quaternary structure, complex of two different subunits.

Functionally, catalyzes the exchange of initiation factor 2-bound GDP for GTP. In Pyrococcus horikoshii (strain ATCC 700860 / DSM 12428 / JCM 9974 / NBRC 100139 / OT-3), this protein is Putative translation initiation factor eIF-2B subunit 2-like.